The chain runs to 159 residues: MNRVLYPGTFDPITKGHGDLVERASRLFDQVVIAVAASPKKNPLFPLEQRVELAREVTKHLPNVEVVGFSTLLAHFAKEQNANVFLRGLRAVSDFEYEFQLANMNRQLAPDVESLFLTPSERYSFISSTLVREIATLGGDITKFVHPAVAQALTERFKR.

Threonine 9 is a substrate binding site. Residues 9–10 and histidine 17 contribute to the ATP site; that span reads TF. Positions 41, 73, and 87 each coordinate substrate. Residues 88–90, glutamate 98, and 123–129 contribute to the ATP site; these read GLR and YSFISST.

Belongs to the bacterial CoaD family. In terms of assembly, homohexamer. Mg(2+) is required as a cofactor.

It localises to the cytoplasm. The catalysed reaction is (R)-4'-phosphopantetheine + ATP + H(+) = 3'-dephospho-CoA + diphosphate. It participates in cofactor biosynthesis; coenzyme A biosynthesis; CoA from (R)-pantothenate: step 4/5. Its function is as follows. Reversibly transfers an adenylyl group from ATP to 4'-phosphopantetheine, yielding dephospho-CoA (dPCoA) and pyrophosphate. The polypeptide is Phosphopantetheine adenylyltransferase (Pseudomonas syringae pv. tomato (strain ATCC BAA-871 / DC3000)).